The primary structure comprises 334 residues: Holliday junction branch migration complex subunit RuvB (334 aa).

Residues 4-184 (ADRLIQPQIQ…FGIPLRLEFY (181 aa)) form a large ATPase domain (RuvB-L) region. ATP is bound by residues R24, G65, K68, T69, T70, 131 to 133 (EDY), R174, Y184, and R221. T69 serves as a coordination point for Mg(2+). The segment at 185-255 (NIKDLSTIVT…VAEHALDLLD (71 aa)) is small ATPAse domain (RuvB-S). Residues 258–334 (SEGFDYMDRK…YQHFELIKPE (77 aa)) form a head domain (RuvB-H) region. Positions 294, 313, and 318 each coordinate DNA.

It belongs to the RuvB family. In terms of assembly, homohexamer. Forms an RuvA(8)-RuvB(12)-Holliday junction (HJ) complex. HJ DNA is sandwiched between 2 RuvA tetramers; dsDNA enters through RuvA and exits via RuvB. An RuvB hexamer assembles on each DNA strand where it exits the tetramer. Each RuvB hexamer is contacted by two RuvA subunits (via domain III) on 2 adjacent RuvB subunits; this complex drives branch migration. In the full resolvosome a probable DNA-RuvA(4)-RuvB(12)-RuvC(2) complex forms which resolves the HJ.

Its subcellular location is the cytoplasm. The enzyme catalyses ATP + H2O = ADP + phosphate + H(+). Functionally, the RuvA-RuvB-RuvC complex processes Holliday junction (HJ) DNA during genetic recombination and DNA repair, while the RuvA-RuvB complex plays an important role in the rescue of blocked DNA replication forks via replication fork reversal (RFR). RuvA specifically binds to HJ cruciform DNA, conferring on it an open structure. The RuvB hexamer acts as an ATP-dependent pump, pulling dsDNA into and through the RuvAB complex. RuvB forms 2 homohexamers on either side of HJ DNA bound by 1 or 2 RuvA tetramers; 4 subunits per hexamer contact DNA at a time. Coordinated motions by a converter formed by DNA-disengaged RuvB subunits stimulates ATP hydrolysis and nucleotide exchange. Immobilization of the converter enables RuvB to convert the ATP-contained energy into a lever motion, pulling 2 nucleotides of DNA out of the RuvA tetramer per ATP hydrolyzed, thus driving DNA branch migration. The RuvB motors rotate together with the DNA substrate, which together with the progressing nucleotide cycle form the mechanistic basis for DNA recombination by continuous HJ branch migration. Branch migration allows RuvC to scan DNA until it finds its consensus sequence, where it cleaves and resolves cruciform DNA. The chain is Holliday junction branch migration complex subunit RuvB from Shewanella baltica (strain OS223).